Consider the following 291-residue polypeptide: MTQNRAELNRNLAQMLKGGVIMDVTTPEQAKIAQDAGACAVMALERIPADIRAAGGVSRMSDPAMIKGIQEAVSIPVMAKVRIGHIAEARILQAIEIDYIDESEVLSPADDVYHIDKNQFDVPFVCGAKNLGEALRRIAEGAAMIRTKGEPGTGDVIQAVRHMRTMNKQIRELVGLRDDEVYEAAKQLAVPYDLAKYVHDNGRLPVVNFAAGGVATPADAALMMELGAEGVFVGSGIFKSGDPAKRAAAIVKATANWQDADLLAKLSENLGEAMVGINEDEIQTIMAARGE.

Asp-23 is a binding site for D-ribose 5-phosphate. The active-site Schiff-base intermediate with D-ribose 5-phosphate is the Lys-80. Residue Gly-152 participates in D-ribose 5-phosphate binding. Arg-164 provides a ligand contact to D-glyceraldehyde 3-phosphate. Residues Gly-213 and 234–235 each bind D-ribose 5-phosphate; that span reads GS.

This sequence belongs to the PdxS/SNZ family. In terms of assembly, in the presence of PdxT, forms a dodecamer of heterodimers.

It carries out the reaction aldehydo-D-ribose 5-phosphate + D-glyceraldehyde 3-phosphate + L-glutamine = pyridoxal 5'-phosphate + L-glutamate + phosphate + 3 H2O + H(+). Its pathway is cofactor biosynthesis; pyridoxal 5'-phosphate biosynthesis. Catalyzes the formation of pyridoxal 5'-phosphate from ribose 5-phosphate (RBP), glyceraldehyde 3-phosphate (G3P) and ammonia. The ammonia is provided by the PdxT subunit. Can also use ribulose 5-phosphate and dihydroxyacetone phosphate as substrates, resulting from enzyme-catalyzed isomerization of RBP and G3P, respectively. The chain is Pyridoxal 5'-phosphate synthase subunit PdxS from Bifidobacterium longum (strain NCC 2705).